The following is a 113-amino-acid chain: MSYLLVAIVCLLTSLGQLCQKQAAECWRRLPVAQRQRVTFGWLMLAALLLGIGLLLWLLVLQHLPLGVAYPLLSINFVLVTLLAHYGFGERVDRHHWWGIALIVIGIYLMQGE.

3 consecutive transmembrane segments (helical) span residues 40 to 60 (FGWL…WLLV), 64 to 84 (LPLG…TLLA), and 92 to 112 (VDRH…LMQG).

Belongs to the ArnE family. Heterodimer of ArnE and ArnF.

Its subcellular location is the cell inner membrane. It participates in bacterial outer membrane biogenesis; lipopolysaccharide biosynthesis. Its function is as follows. Translocates 4-amino-4-deoxy-L-arabinose-phosphoundecaprenol (alpha-L-Ara4N-phosphoundecaprenol) from the cytoplasmic to the periplasmic side of the inner membrane. This Pectobacterium atrosepticum (strain SCRI 1043 / ATCC BAA-672) (Erwinia carotovora subsp. atroseptica) protein is Probable 4-amino-4-deoxy-L-arabinose-phosphoundecaprenol flippase subunit ArnE.